We begin with the raw amino-acid sequence, 424 residues long: Enolase (424 aa).

(2R)-2-phosphoglycerate is bound at residue Q163. E204 functions as the Proton donor in the catalytic mechanism. Positions 241, 284, and 311 each coordinate Mg(2+). 4 residues coordinate (2R)-2-phosphoglycerate: K336, R365, S366, and K387. K336 functions as the Proton acceptor in the catalytic mechanism.

This sequence belongs to the enolase family. The cofactor is Mg(2+).

The protein resides in the cytoplasm. Its subcellular location is the secreted. It is found in the cell surface. It catalyses the reaction (2R)-2-phosphoglycerate = phosphoenolpyruvate + H2O. Its pathway is carbohydrate degradation; glycolysis; pyruvate from D-glyceraldehyde 3-phosphate: step 4/5. Its function is as follows. Catalyzes the reversible conversion of 2-phosphoglycerate (2-PG) into phosphoenolpyruvate (PEP). It is essential for the degradation of carbohydrates via glycolysis. This Dictyoglomus thermophilum (strain ATCC 35947 / DSM 3960 / H-6-12) protein is Enolase.